The sequence spans 271 residues: Formamidopyrimidine-DNA glycosylase (271 aa).

The active-site Schiff-base intermediate with DNA is P2. E3 serves as the catalytic Proton donor. Residue K58 is the Proton donor; for beta-elimination activity of the active site. Residues H92, R111, and K152 each contribute to the DNA site. The segment at 237–271 (YVYGKVQKPCKICNNTITLIRQNGRSTYFCNACQN) adopts an FPG-type zinc-finger fold. R261 functions as the Proton donor; for delta-elimination activity in the catalytic mechanism.

It belongs to the FPG family. Monomer. The cofactor is Zn(2+).

The catalysed reaction is Hydrolysis of DNA containing ring-opened 7-methylguanine residues, releasing 2,6-diamino-4-hydroxy-5-(N-methyl)formamidopyrimidine.. It carries out the reaction 2'-deoxyribonucleotide-(2'-deoxyribose 5'-phosphate)-2'-deoxyribonucleotide-DNA = a 3'-end 2'-deoxyribonucleotide-(2,3-dehydro-2,3-deoxyribose 5'-phosphate)-DNA + a 5'-end 5'-phospho-2'-deoxyribonucleoside-DNA + H(+). Involved in base excision repair of DNA damaged by oxidation or by mutagenic agents. Acts as a DNA glycosylase that recognizes and removes damaged bases. Has a preference for oxidized purines, such as 7,8-dihydro-8-oxoguanine (8-oxoG). Has AP (apurinic/apyrimidinic) lyase activity and introduces nicks in the DNA strand. Cleaves the DNA backbone by beta-delta elimination to generate a single-strand break at the site of the removed base with both 3'- and 5'-phosphates. The chain is Formamidopyrimidine-DNA glycosylase from Wolbachia sp. subsp. Brugia malayi (strain TRS).